The following is a 508-amino-acid chain: Matrix metalloproteinase-19 (508 aa).

The first 18 residues, 1-18, serve as a signal peptide directing secretion; that stretch reads MNCQQLWLGFLLPMTVSG. Positions 19-97 are excised as a propeptide; sequence RVLGLAEVAP…EDPFNQKTLK (79 aa). Positions 83-90 match the Cysteine switch motif; sequence PRCGLEDP. Residues cysteine 85 and histidine 212 each coordinate Zn(2+). Glutamate 213 is a catalytic residue. Zn(2+)-binding residues include histidine 216 and histidine 222. A disordered region spans residues 262 to 288; sequence IRDEEEEETELPTVPPVPTEPSPMPDP. The span at 274-287 shows a compositional bias: pro residues; the sequence is TVPPVPTEPSPMPD. Hemopexin repeat units follow at residues 286–333, 334–380, 381–425, and 426–472; these read PDPC…WEGL, PGNL…EPNL, DAAL…FTGV, and PNQP…WMHC. A disulfide bond links cysteine 289 and cysteine 472. Asparagine 464 is a glycosylation site (N-linked (GlcNAc...) asparagine).

This sequence belongs to the peptidase M10A family. Zn(2+) is required as a cofactor. Requires Ca(2+) as cofactor. Post-translationally, activated by autolytic cleavage after Lys-97. In terms of processing, tyrosine phosphorylated by PKDCC/VLK. In terms of tissue distribution, expressed in mammary gland, placenta, lung, pancreas, ovary, small intestine, spleen, thymus, prostate, testis colon, heart and blood vessel walls. Not detected in brain and peripheral blood leukocytes. Also expressed in the synovial fluid of normal and rheumatoid patients.

Its subcellular location is the secreted. It localises to the extracellular space. The protein resides in the extracellular matrix. Strongly inhibited by TIMP-2, TIMP-3 and TIMP-4, while TIMP-1 is less efficient. Its function is as follows. Endopeptidase that degrades various components of the extracellular matrix, such as aggrecan and cartilage oligomeric matrix protein (comp), during development, haemostasis and pathological conditions (arthritic disease). May also play a role in neovascularization or angiogenesis. Hydrolyzes collagen type IV, laminin, nidogen, nascin-C isoform, fibronectin, and type I gelatin. This is Matrix metalloproteinase-19 (MMP19) from Homo sapiens (Human).